The following is a 329-amino-acid chain: tRNA N6-adenosine threonylcarbamoyltransferase (329 aa).

Residues histidine 110 and histidine 114 each contribute to the Fe cation site. Residues valine 132–glycine 136, aspartate 165, glycine 178, and asparagine 271 contribute to the substrate site. Aspartate 299 provides a ligand contact to Fe cation.

It belongs to the KAE1 / TsaD family. Requires Fe(2+) as cofactor.

The protein localises to the cytoplasm. The catalysed reaction is L-threonylcarbamoyladenylate + adenosine(37) in tRNA = N(6)-L-threonylcarbamoyladenosine(37) in tRNA + AMP + H(+). Its function is as follows. Required for the formation of a threonylcarbamoyl group on adenosine at position 37 (t(6)A37) in tRNAs that read codons beginning with adenine. Is involved in the transfer of the threonylcarbamoyl moiety of threonylcarbamoyl-AMP (TC-AMP) to the N6 group of A37, together with TsaE and TsaB. TsaD likely plays a direct catalytic role in this reaction. The protein is tRNA N6-adenosine threonylcarbamoyltransferase of Neorickettsia sennetsu (strain ATCC VR-367 / Miyayama) (Ehrlichia sennetsu).